Here is an 804-residue protein sequence, read N- to C-terminus: Leucine--tRNA ligase (804 aa).

The 'HIGH' region signature appears at 40–51 (PYPSGAGLHVGH). Residues 576 to 580 (KMSKS) carry the 'KMSKS' region motif. Position 579 (K579) interacts with ATP.

Belongs to the class-I aminoacyl-tRNA synthetase family.

The protein resides in the cytoplasm. The enzyme catalyses tRNA(Leu) + L-leucine + ATP = L-leucyl-tRNA(Leu) + AMP + diphosphate. The protein is Leucine--tRNA ligase of Bacillus licheniformis (strain ATCC 14580 / DSM 13 / JCM 2505 / CCUG 7422 / NBRC 12200 / NCIMB 9375 / NCTC 10341 / NRRL NRS-1264 / Gibson 46).